Here is a 270-residue protein sequence, read N- to C-terminus: Putative phosphoenolpyruvate synthase regulatory protein (270 aa).

149 to 156 provides a ligand contact to ADP; that stretch reads GVSRSGKT.

This sequence belongs to the pyruvate, phosphate/water dikinase regulatory protein family. PSRP subfamily.

It catalyses the reaction [pyruvate, water dikinase] + ADP = [pyruvate, water dikinase]-phosphate + AMP + H(+). The catalysed reaction is [pyruvate, water dikinase]-phosphate + phosphate + H(+) = [pyruvate, water dikinase] + diphosphate. Functionally, bifunctional serine/threonine kinase and phosphorylase involved in the regulation of the phosphoenolpyruvate synthase (PEPS) by catalyzing its phosphorylation/dephosphorylation. This chain is Putative phosphoenolpyruvate synthase regulatory protein, found in Pseudoalteromonas atlantica (strain T6c / ATCC BAA-1087).